Reading from the N-terminus, the 942-residue chain is Cilia- and flagella-associated protein 69 (942 aa).

The span at 1–16 shows a compositional bias: low complexity; the sequence is MSTAEASATTADAAEA. Positions 1 to 25 are disordered; the sequence is MSTAEASATTADAAEAGGRTKTGSP.

In terms of tissue distribution, expressed in ciliated olfactory sensory neurons (at protein level). Expressed in testis, specifically in sperm (at protein level).

Its subcellular location is the cell projection. The protein resides in the cilium. It is found in the flagellum. Functionally, cilium- and flagellum-associated protein. In the olfactory epithelium, regulates the speed of activation and termination of the odor response and thus contributes to the robustness of olfactory transduction pathways. Required for sperm flagellum assembly and stability. The sequence is that of Cilia- and flagella-associated protein 69 from Mus musculus (Mouse).